We begin with the raw amino-acid sequence, 360 residues long: Chorismate synthase (360 aa).

R46 contributes to the NADP(+) binding site. FMN contacts are provided by residues 122–124 (RAS), G282, 297–301 (KPTPS), and R324.

This sequence belongs to the chorismate synthase family. The cofactor is FMNH2.

It carries out the reaction 5-O-(1-carboxyvinyl)-3-phosphoshikimate = chorismate + phosphate. It functions in the pathway metabolic intermediate biosynthesis; chorismate biosynthesis; chorismate from D-erythrose 4-phosphate and phosphoenolpyruvate: step 7/7. Its function is as follows. Catalyzes the anti-1,4-elimination of the C-3 phosphate and the C-6 proR hydrogen from 5-enolpyruvylshikimate-3-phosphate (EPSP) to yield chorismate, which is the branch point compound that serves as the starting substrate for the three terminal pathways of aromatic amino acid biosynthesis. This reaction introduces a second double bond into the aromatic ring system. The chain is Chorismate synthase from Archaeoglobus fulgidus (strain ATCC 49558 / DSM 4304 / JCM 9628 / NBRC 100126 / VC-16).